The primary structure comprises 546 residues: Phosphatidylinositol 4-phosphate 5-kinase type-1 alpha (546 aa).

Residues 66–434 (TSSALKGAIQ…RFQRFMCNTV (369 aa)) form the PIPK domain. K88 is covalently cross-linked (Glycyl lysine isopeptide (Lys-Gly) (interchain with G-Cter in ubiquitin)). Disordered stretches follow at residues 442 to 475 (PSPT…SGEH) and 491 to 518 (LGRP…PSFS). Low complexity-rich tracts occupy residues 450 to 462 (SGPS…GPSG) and 509 to 518 (GSPVPGPSFS).

Interacts with RAC1. Interacts with TUT1. Forms a complex with CDH1/E-cadherin, CTNNB1/beta-catenin and CTNND1 at the plasma membrane upon calcium stimulation. Found in a ternary complex with IRS1 and DGKZ in the absence of insulin stimulation. Interacts with DGKZ. Interacts with PIP4K2C; the interaction inhibits PIP5K1A kinase activity. Highest expression in brain. Also detected in skeletal muscle, testis, brain and lung.

The protein localises to the cell membrane. The protein resides in the cytoplasm. It localises to the nucleus. It is found in the nucleus speckle. Its subcellular location is the cell projection. The protein localises to the ruffle. The protein resides in the lamellipodium. It carries out the reaction a 1,2-diacyl-sn-glycero-3-phospho-(1D-myo-inositol 4-phosphate) + ATP = a 1,2-diacyl-sn-glycero-3-phospho-(1D-myo-inositol-4,5-bisphosphate) + ADP + H(+). The enzyme catalyses 1-octadecanoyl-2-(5Z,8Z,11Z,14Z)-eicosatetraenoyl-sn-glycero-3-phospho-1D-myo-inositol 4-phosphate + ATP = 1-octadecanoyl-2-(5Z,8Z,11Z,14Z)-eicosatetraenoyl-sn-glycero-3-phospho-1D-myo-inositol 4,5-bisphosphate + ADP + H(+). The catalysed reaction is 1,2-dihexadecanoyl-sn-glycero-3-phospho-(1D-myo-inositol-4-phosphate) + ATP = 1,2-dihexadecanoyl-sn-glycero-3-phospho-(1D-myo-inositol-4,5-bisphosphate) + ADP + H(+). It catalyses the reaction 1-octadecanoyl-2-(9Z)-octadecenoyl-sn-glycero-3-phospho-1D-myo-inositol 4-phosphate + ATP = 1-octadecanoyl-2-(9Z)-octadecenoyl-sn-glycero-3-phospho-1D-myo-inositol 4,5-bisphosphate + ADP + H(+). It carries out the reaction 1-octadecanoyl-2-(9Z)-octadecenoyl-sn-glycero-3-phospho-1D-myo-inositol + ATP = 1-octadecanoyl-2-(9Z)-octadecenoyl-sn-glycero-3-phospho-1D-myo-inositol 5-phosphate + ADP + H(+). The enzyme catalyses 1-octadecanoyl-2-(9Z,12Z)-octadecadienoyl-sn-glycero-3-phospho-1D-myo-inositol + ATP = 1-octadecanoyl-2-(9Z,12Z)-octadecadienoyl-sn-glycero-3-phospho-1D-myo-inositol 5-phosphate + ADP + H(+). The catalysed reaction is 1-octadecanoyl-2-(5Z,8Z,11Z,14Z-eicosatetraenoyl)-sn-glycero-3-phospho-(1D-myo-inositol) + ATP = 1-octadecanoyl-2-(5Z,8Z,11Z,14Z)-eicosatetraenoyl-sn-glycero-3-phospho-1D-myo-inositol 5-phosphate + ADP + H(+). It catalyses the reaction 1,2-di-(9Z,12Z)-octadecadienoyl-sn-glycero-3-phospho-1D-myo-inositol + ATP = 1,2-di(9Z,12Z)-octadecadienoyl-sn-glycero-3-phospho-1D-myo-inositol 5-phosphate + ADP + H(+). Its activity is regulated as follows. Activated by phosphatidic acid. Functionally, catalyzes the phosphorylation of phosphatidylinositol 4-phosphate (PtdIns(4)P/PI4P) to form phosphatidylinositol 4,5-bisphosphate (PtdIns(4,5)P2/PIP2), a lipid second messenger that regulates several cellular processes such as signal transduction, vesicle trafficking, actin cytoskeleton dynamics, cell adhesion, and cell motility. PtdIns(4,5)P2 can directly act as a second messenger or can be utilized as a precursor to generate other second messengers: inositol 1,4,5-trisphosphate (IP3), diacylglycerol (DAG) or phosphatidylinositol-3,4,5-trisphosphate (PtdIns(3,4,5)P3/PIP3). PIP5K1A-mediated phosphorylation of PtdIns(4)P is the predominant pathway for PtdIns(4,5)P2 synthesis. Can also use phosphatidylinositol (PtdIns) as substrate in vitro. Together with PIP5K1C, is required for phagocytosis, both enzymes regulating different types of actin remodeling at sequential steps. Promotes particle ingestion by activating the WAS GTPase-binding protein that induces Arp2/3 dependent actin polymerization at the nascent phagocytic cup. Together with PIP5K1B, is required, after stimulation by G-protein coupled receptors, for the synthesis of IP3 that will induce stable platelet adhesion. Recruited to the plasma membrane by the E-cadherin/beta-catenin complex where it provides the substrate PtdIns(4,5)P2 for the production of PtdIns(3,4,5)P3, IP3 and DAG, that will mobilize internal calcium and drive keratinocyte differentiation. Positively regulates insulin-induced translocation of SLC2A4 to the cell membrane in adipocytes. Together with PIP5K1C has a role during embryogenesis. Independently of its catalytic activity, is required for membrane ruffling formation, actin organization and focal adhesion formation during directional cell migration by controlling integrin-induced translocation of the small GTPase RAC1 to the plasma membrane. Also functions in the nucleus where it acts as an activator of TUT1 adenylyltransferase activity in nuclear speckles, thereby regulating mRNA polyadenylation of a select set of mRNAs. The polypeptide is Phosphatidylinositol 4-phosphate 5-kinase type-1 alpha (Mus musculus (Mouse)).